An 849-amino-acid chain; its full sequence is Disks large homolog 3 (849 aa).

A disordered region spans residues 32–101 (DWQVPDPYGP…GKSTPKLNGS (70 aa)). Gly residues predominate over residues 41-53 (PSGGNGASSGYGG). Residues 57–69 (QTLPSQAGATPTP) are compositionally biased toward polar residues. PDZ domains are found at residues 149 to 235 (EIVL…VRRR), 244 to 330 (EVNL…VAKP), and 404 to 484 (KIIL…AQYR). Position 157 is a phosphoserine (serine 157). The 71-residue stretch at 519–589 (KRSLYVRALF…PSKKRVEKKE (71 aa)) folds into the SH3 domain. Positions 659–834 (ARPVIILGPM…IYNKIKQIIE (176 aa)) constitute a Guanylate kinase-like domain. A Phosphotyrosine modification is found at tyrosine 705.

Belongs to the MAGUK family. Interacts through its PDZ domains with NETO1, GRIN2B, SYNGAP1 and APC. Interacts through its first two PDZ domains with ERBB4. Interacts through its third PDZ domain with NLGN1, and probably with NLGN2 and NLGN3. Interacts through its guanylate kinase-like domain with DLGAP1, DLGAP2, DLGAP3 and DLGAP4. Interacts with FRMPD4 (via C-terminus). Interacts with LRFN1, LRFN2 and LRFN4. Interacts with FLTP. Interacts with GPR85. Interacts with DGKI (via PDZ-binding motif).

Required for learning most likely through its role in synaptic plasticity following NMDA receptor signaling. The protein is Disks large homolog 3 (Dlg3) of Mus musculus (Mouse).